Here is a 207-residue protein sequence, read N- to C-terminus: Large ribosomal subunit protein uL4 (207 aa).

The disordered stretch occupies residues 49–78; sequence HAVKNRSAVSGGGRKPWRQKGTGRARQGSI.

This sequence belongs to the universal ribosomal protein uL4 family. In terms of assembly, part of the 50S ribosomal subunit.

One of the primary rRNA binding proteins, this protein initially binds near the 5'-end of the 23S rRNA. It is important during the early stages of 50S assembly. It makes multiple contacts with different domains of the 23S rRNA in the assembled 50S subunit and ribosome. Functionally, forms part of the polypeptide exit tunnel. The protein is Large ribosomal subunit protein uL4 of Streptococcus pneumoniae serotype 2 (strain D39 / NCTC 7466).